Here is a 93-residue protein sequence, read N- to C-terminus: UPF0473 protein YrzB (93 aa).

The protein belongs to the UPF0473 family.

The protein is UPF0473 protein YrzB (yrzB) of Bacillus subtilis (strain 168).